We begin with the raw amino-acid sequence, 109 residues long: uncharacterized protein (109 aa).

It to A.calcoaceticus putative ferredoxin.

This is an uncharacterized protein from Escherichia coli O157:H7.